The primary structure comprises 283 residues: Probable endonuclease 4 (283 aa).

Positions 69, 113, 148, 182, 185, 217, 230, 232, and 262 each coordinate Zn(2+).

The protein belongs to the AP endonuclease 2 family. It depends on Zn(2+) as a cofactor.

The catalysed reaction is Endonucleolytic cleavage to 5'-phosphooligonucleotide end-products.. Endonuclease IV plays a role in DNA repair. It cleaves phosphodiester bonds at apurinic or apyrimidinic (AP) sites, generating a 3'-hydroxyl group and a 5'-terminal sugar phosphate. The polypeptide is Probable endonuclease 4 (Bifidobacterium longum (strain DJO10A)).